A 220-amino-acid polypeptide reads, in one-letter code: Probable septum site-determining protein MinC (220 aa).

The protein belongs to the MinC family. Interacts with MinD and FtsZ.

Cell division inhibitor that blocks the formation of polar Z ring septums. Rapidly oscillates between the poles of the cell to destabilize FtsZ filaments that have formed before they mature into polar Z rings. Prevents FtsZ polymerization. In Vibrio atlanticus (strain LGP32) (Vibrio splendidus (strain Mel32)), this protein is Probable septum site-determining protein MinC.